A 217-amino-acid polypeptide reads, in one-letter code: Tegument protein BKRF4 (217 aa).

Residues 1–217 (MAMFLKSRGV…GNNNYNWPWL (217 aa)) form a disordered region. A compositionally biased stretch (polar residues) spans 32–42 (YTLGSQASQSI). Acidic residues predominate over residues 43–79 (QEEDVSDTDESDYSDEDEEIDLEEEYPSDEDPSEGSD). An interaction with host histones H3/H4 region spans residues 63 to 64 (DL). The segment at 81–84 (DPSW) is interaction with host H2A/H2B. Positions 89-102 (SDESDYSESDEDEA) are enriched in acidic residues. Positions 106–132 (SQASRSSRVSPSTQQSSGLTPTPSFSR) are enriched in low complexity. Positions 136 to 145 (RAPPRPPAPA) are enriched in pro residues. Over residues 208-217 (GNNNYNWPWL) the composition is skewed to polar residues.

Belongs to the lymphocryptovirus BKRF4 family. In terms of assembly, forms a complex with the host H3/H4 dimer and histone chaperone ASF1. Also forms a complex with host H2A/H2B dimer. Interacts (via C-terminus) with BGLF2; this interaction is important for infectious virion production.

The protein localises to the virion tegument. It localises to the host nucleus. The protein resides in the host cytoplasm. It is found in the host perinuclear region. In terms of biological role, histone-binding protein that binds to histones H2A/H2B, H3/H4 and cellular chromatin to overcome the host DNA damage response triggered by the viral genome ends. Interferes with histone ubiquitination and recruitment of repair proteins. This chain is Tegument protein BKRF4, found in Epstein-Barr virus (strain AG876) (HHV-4).